Reading from the N-terminus, the 561-residue chain is Carboxylesterase patB (561 aa).

Residues 1–19 form the signal peptide; that stretch reads MQIINWASLLLVTWETVVA. 3 N-linked (GlcNAc...) asparagine glycosylation sites follow: Asn38, Asn69, and Asn109. Ser263 serves as the catalytic Acyl-ester intermediate. Ser263 is a binding site for substrate. N-linked (GlcNAc...) asparagine glycosylation is present at Asn316. Catalysis depends on Glu385, which acts as the Charge relay system. Residues Asn393, Asn412, Asn429, and Asn496 are each glycosylated (N-linked (GlcNAc...) asparagine).

This sequence belongs to the type-B carboxylesterase/lipase family.

The protein resides in the cytoplasm. The protein localises to the cytosol. It catalyses the reaction a carboxylic ester + H2O = an alcohol + a carboxylate + H(+). It functions in the pathway mycotoxin biosynthesis; patulin biosynthesis. In terms of biological role, carboxylesterase; part of the gene cluster that mediates the biosynthesis of patulin, an acetate-derived tetraketide mycotoxin produced by several fungal species that shows antimicrobial properties against several bacteria. The function of patB in patulin synthesis has still to be characterized. The pathway begins with the synthesis of 6-methylsalicylic acid by the polyketide synthase (PKS) patK via condensation of acetate and malonate units. The 6-methylsalicylic acid decarboxylase patG then catalyzes the decarboxylation of 6-methylsalicylic acid to yield m-cresol (also known as 3-methylphenol). These first reactions occur in the cytosol. The intermediate m-cresol is then transported into the endoplasmic reticulum where the cytochrome P450 monooxygenase patH converts it to m-hydroxybenzyl alcohol, which is further converted to gentisyl alcohol by the cytochrome P450 monooxygenase patI. The oxidoreductases patJ and patO further convert gentisyl alcohol to isoepoxydon in the vacuole. PatN catalyzes then the transformation of isoepoxydon into phyllostine. The cluster protein patF is responsible for the conversion from phyllostine to neopatulin whereas the alcohol dehydrogenase patD converts neopatulin to E-ascladiol. The steps between isoepoxydon and E-ascladiol occur in the cytosol, and E-ascladiol is probably secreted to the extracellular space by one of the cluster-specific transporters patC or patM. Finally, the secreted patulin synthase patE catalyzes the conversion of E-ascladiol to patulin. This Penicillium expansum (Blue mold rot fungus) protein is Carboxylesterase patB.